Consider the following 126-residue polypeptide: Large ribosomal subunit protein uL22 (126 aa).

Belongs to the universal ribosomal protein uL22 family. In terms of assembly, part of the 50S ribosomal subunit.

Its function is as follows. This protein binds specifically to 23S rRNA; its binding is stimulated by other ribosomal proteins, e.g. L4, L17, and L20. It is important during the early stages of 50S assembly. It makes multiple contacts with different domains of the 23S rRNA in the assembled 50S subunit and ribosome. The globular domain of the protein is located near the polypeptide exit tunnel on the outside of the subunit, while an extended beta-hairpin is found that lines the wall of the exit tunnel in the center of the 70S ribosome. The sequence is that of Large ribosomal subunit protein uL22 from Paracoccus denitrificans (strain Pd 1222).